A 20-amino-acid chain; its full sequence is Thrombin-like enzyme Cdc SII (20 aa).

This sequence belongs to the peptidase S1 family. Snake venom subfamily. As to quaternary structure, monomer. As to expression, expressed by the venom gland.

The protein resides in the secreted. Strongly inhibited by PMSF and moderately inhibited by leupeptin. Not inhibited by EDTA, aprotinin, pepstatin, and bestatin. In terms of biological role, thrombin-like snake venom serine protease that coagulates human plasma and bovine fibrinogen by hydrolysis of the alpha chains (FGA) (minimum coagulation dose is 60 ug on fibrinogen). Has fibrinogenolytic activities, and degrades preferentially the Aalpha chain (FGA). Shows amidolytic activity toward N-benzoyl-L-Arg-p-nitroanilide, has a higher activity than Cdc SI. In vivo, intravenous injection induces defibrin(ogen)ation and a loss of the righting reflex and opisthotoxins, together with a typical gyroxin-like effect (18-20 minutes). Subcutaneous injection into the footpads induces moderate edema. Potentiates local hemorrhagic activity induced by metalloproteinases (BaP1). This chain is Thrombin-like enzyme Cdc SII, found in Crotalus durissus cumanensis (South American rattlesnake).